Here is a 2395-residue protein sequence, read N- to C-terminus: Centrosomal protein of 295 kDa (2395 aa).

The interval Met-1–Pro-540 is necessary for centriole targeting and microtubule association. Ser-13 bears the Phosphoserine mark. 5 coiled-coil regions span residues Gln-53 to Leu-84, Ala-114 to Ala-148, Asp-209 to Thr-277, Ala-488 to Val-538, and Gln-567 to Glu-592. Disordered regions lie at residues Leu-602–Pro-643, Gly-660–Arg-681, and Ser-735–Glu-764. Ser-634 carries the phosphoserine modification. Low complexity predominate over residues Ser-735–Ser-750. Residues Gly-817–Thr-848 adopt a coiled-coil conformation. Disordered stretches follow at residues Ser-864–Asn-893, Ala-966–Leu-986, and Val-1212–Thr-1272. Residues Phe-1219 to Ser-1250 are compositionally biased toward polar residues. Residues His-1444–Ile-1488 are a coiled coil. Phosphoserine is present on Ser-1565. The segment covering Pro-1677–Gly-1692 has biased composition (low complexity). Disordered stretches follow at residues Pro-1677–Lys-1715, Ser-1819–Glu-1845, Glu-1875–Ser-1899, Asp-1989–Lys-2013, and Asn-2354–Ile-2395. The segment covering His-1697 to Ser-1710 has biased composition (basic and acidic residues). Residues Gln-1880–Glu-1894 are compositionally biased toward basic and acidic residues. Positions Ser-2329–Ile-2395 are ALMS motif. Positions His-2376–Lys-2388 are enriched in basic and acidic residues.

As to quaternary structure, interacts (via ALMS motif) with microtubules; this interaction is direct.

The protein resides in the cytoplasm. The protein localises to the cytoskeleton. Its subcellular location is the microtubule organizing center. It is found in the centrosome. It localises to the centriole. The protein resides in the spindle. Functionally, centriole-enriched microtubule-binding protein involved in centriole biogenesis. Essential for the generation of the distal portion of new-born centrioles in a CPAP- and CEP120-mediated elongation dependent manner during the cell cycle S/G2 phase after formation of the initiating cartwheel structure. Required for the recruitment of centriolar proteins, such as POC1B, POC5 and CEP135, into the distal portion of centrioles. Also required for centriole-to-centrosome conversion during mitotic progression, but is dispensable for cartwheel removal or centriole disengagement. Binds to and stabilizes centriolar microtubule. May be involved in ciliogenesis. The sequence is that of Centrosomal protein of 295 kDa from Rattus norvegicus (Rat).